Reading from the N-terminus, the 149-residue chain is Calmodulin (149 aa).

4 EF-hand domains span residues 8–43, 44–79, 81–116, and 117–149; these read EQIAEFKEAFSLFDKDGDGTITTKELGTVMRSLGQN, PTEAELQDMINEVDADGNGTIDFPEFLTMMARKMKD, DSEEEILEAFKVFDKDGNGFISAAELRHIMTNLGEK, and LTDEEVDEMIREADIDGDGQINYEEFVKMMMSK. Ca(2+) contacts are provided by aspartate 21, aspartate 23, aspartate 25, threonine 27, glutamate 32, aspartate 57, aspartate 59, asparagine 61, threonine 63, glutamate 68, aspartate 94, aspartate 96, asparagine 98, glutamate 105, aspartate 130, aspartate 132, aspartate 134, glutamine 136, and glutamate 141.

This sequence belongs to the calmodulin family.

Functionally, calmodulin mediates the control of a large number of enzymes, ion channels and other proteins by Ca(2+). Among the enzymes to be stimulated by the calmodulin-Ca(2+) complex are a number of protein kinases and phosphatases. The protein is Calmodulin of Globisporangium splendens (Leaf rot fungus).